Consider the following 133-residue polypeptide: uncharacterized protein (133 aa).

This is an uncharacterized protein from Aquifex aeolicus (strain VF5).